The following is a 523-amino-acid chain: MSQQVIIFDTTLRDGEQALQASLSAKEKLQIALALERMGVDVMEVGFPVSSPGDFESVQTIARTIKNSRVCALARCVEKDIDVAAQALKVADAFRIHTFIATSPMHIATKLRSTLDEVIERAVYMVKRARNYTDDVEFSCEDAGRTPVDDLARVVEAAINAGARTINIPDTVGYTMPFEFAGIISGLYERVPNIDKAIISVHTHDDLGIAVGNSLAAVHAGARQVEGAMNGIGERAGNCALEEVIMAIKVRKDIMNVHTNINHHEIWRTSQTVSQICNMPIPANKAIVGSGAFAHSSGIHQDGVLKNRENYEIMTPESIGLNQIQLNLTSRSGRAAVKHRMEEMGYKDTDYNMDHLYDAFLKLADKKGQVFDYDLEALAFINKQQEEPEHFRLDYFSVQSGSSDIATASVKLACGEEIKAEAANGNGPVDAIYQAINRITGYDVELVKYDLNAKGQGKDALGQVDIVVNHHGRRFHGVGLATDIVESSAKAMVHVLNNIWRAAEVEKELQRKAQNKENNKETV.

One can recognise a Pyruvate carboxyltransferase domain in the interval 5–267 (VIIFDTTLRD…HTNINHHEIW (263 aa)). Mn(2+)-binding residues include D14, H202, H204, and N238. The regulatory domain stretch occupies residues 392–523 (RLDYFSVQSG…QNKENNKETV (132 aa)).

It belongs to the alpha-IPM synthase/homocitrate synthase family. LeuA type 1 subfamily. In terms of assembly, homodimer. Mn(2+) is required as a cofactor.

Its subcellular location is the cytoplasm. It carries out the reaction 3-methyl-2-oxobutanoate + acetyl-CoA + H2O = (2S)-2-isopropylmalate + CoA + H(+). It participates in amino-acid biosynthesis; L-leucine biosynthesis; L-leucine from 3-methyl-2-oxobutanoate: step 1/4. In terms of biological role, catalyzes the condensation of the acetyl group of acetyl-CoA with 3-methyl-2-oxobutanoate (2-ketoisovalerate) to form 3-carboxy-3-hydroxy-4-methylpentanoate (2-isopropylmalate). This chain is 2-isopropylmalate synthase, found in Salmonella dublin (strain CT_02021853).